The sequence spans 240 residues: GATA transcription factor 4 (240 aa).

The disordered stretch occupies residues 104–124 (ISFTGKPRSRRSRAPAPSVAG). A Nuclear localization signal motif is present at residues 109-116 (KPRSRRSR). The segment at 154–208 (ADGARRCTHCASEKTPQWRTGPLGPKTLCNACGVRYKSGRLVPEYRPASSPTFVL) adopts a GATA-type zinc-finger fold.

Belongs to the type IV zinc-finger family. Class A subfamily. In terms of tissue distribution, expressed in roots, flowers and leaves, and to a lower extent in stems.

The protein localises to the nucleus. Functionally, transcriptional activator that specifically binds 5'-GATA-3' or 5'-GAT-3' motifs within gene promoters. May be involved in the regulation of some light-responsive genes. This Arabidopsis thaliana (Mouse-ear cress) protein is GATA transcription factor 4 (GATA4).